The sequence spans 92 residues: Small ribosomal subunit protein bS20 (92 aa).

The interval 1 to 25 (MANSAQARKRARQAAKANSHNSALR) is disordered.

Belongs to the bacterial ribosomal protein bS20 family.

Functionally, binds directly to 16S ribosomal RNA. This is Small ribosomal subunit protein bS20 from Burkholderia mallei (strain NCTC 10247).